The chain runs to 538 residues: Phosphoenolpyruvate carboxykinase (ATP) (538 aa).

Arginine 64 contacts substrate. Residue arginine 152 coordinates ATP. Tyrosine 205 and lysine 211 together coordinate substrate. Residues lysine 211, histidine 230, and 246–254 (GLSGTGKTT) each bind ATP. Mn(2+)-binding residues include lysine 211 and histidine 230. Aspartate 267 contacts Mn(2+). Residues glutamate 295, arginine 331, arginine 344, 447 to 448 (RI), and threonine 453 contribute to the ATP site. Position 331 (arginine 331) interacts with substrate.

The protein belongs to the phosphoenolpyruvate carboxykinase (ATP) family. Monomer. Requires Mn(2+) as cofactor.

The protein resides in the cytoplasm. It catalyses the reaction oxaloacetate + ATP = phosphoenolpyruvate + ADP + CO2. Its pathway is carbohydrate biosynthesis; gluconeogenesis. Its function is as follows. Involved in gluconeogenesis. Catalyzes the conversion of oxaloacetate (OAA) to phosphoenolpyruvate (PEP) through direct phosphoryl transfer between the nucleoside triphosphate and OAA. The polypeptide is Phosphoenolpyruvate carboxykinase (ATP) (Actinobacillus succinogenes (strain ATCC 55618 / DSM 22257 / CCUG 43843 / 130Z)).